Here is a 530-residue protein sequence, read N- to C-terminus: Inactive ubiquitin carboxyl-terminal hydrolase 17-like protein 8 (530 aa).

The USP domain maps to 80-375; that stretch reads AGLQNMGNTC…QAYVLFYIQK (296 aa). Residues 382–392 are compositionally biased toward basic and acidic residues; it reads SESVSRGREPR. 2 disordered regions span residues 382 to 412 and 493 to 530; these read SESVSRGREPRALGAEDTDRPATQGELKRDH and NSTDQESMNTGTLASLQGRTRRSKGKNKHSKRSLLVCQ. Residues 495 to 510 are compositionally biased toward polar residues; sequence TDQESMNTGTLASLQG. Residues 511–524 are compositionally biased toward basic residues; that stretch reads RTRRSKGKNKHSKR.

The protein belongs to the peptidase C19 family. USP17 subfamily.

It localises to the nucleus. The protein localises to the endoplasmic reticulum. The polypeptide is Inactive ubiquitin carboxyl-terminal hydrolase 17-like protein 8 (USP17L8) (Homo sapiens (Human)).